Here is a 1030-residue protein sequence, read N- to C-terminus: Importin beta-like SAD2 homolog (1030 aa).

The residue at position 1 (Met-1) is an N-acetylmethionine. The region spanning 25-99 is the Importin N-terminal domain; the sequence is AEQSLNQLQH…RNQILVFVSQ (75 aa). Disordered regions lie at residues 886–928 and 940–964; these read AAKA…GSTL and SYSD…PIDE. 2 stretches are compositionally biased toward acidic residues: residues 890 to 924 and 943 to 964; these read EEEE…DETD and DDDD…PIDE.

Belongs to the importin beta family.

It localises to the cytoplasm. The protein resides in the nucleus. Its function is as follows. Functions probably in nuclear protein import, either by acting as autonomous nuclear transport receptor or as an adapter-like protein in association with other importin subunits. This chain is Importin beta-like SAD2 homolog, found in Arabidopsis thaliana (Mouse-ear cress).